Here is a 222-residue protein sequence, read N- to C-terminus: Glutathione S-transferase U21 (222 aa).

The region spanning 3 to 83 (AEVILLGFWP…YIDEVWSDNN (81 aa)) is the GST N-terminal domain. Glutathione contacts are provided by residues 13 to 14 (SM), 40 to 41 (NK), 54 to 55 (TI), and 67 to 68 (ES). Residues 89-211 (DPYHRAQALF…LPDSEKVVGY (123 aa)) enclose the GST C-terminal domain.

The protein belongs to the GST superfamily. Tau family.

The protein localises to the cytoplasm. Its subcellular location is the cytosol. It catalyses the reaction RX + glutathione = an S-substituted glutathione + a halide anion + H(+). May be involved in the conjugation of reduced glutathione to a wide number of exogenous and endogenous hydrophobic electrophiles and have a detoxification role against certain herbicides. The protein is Glutathione S-transferase U21 (GSTU21) of Arabidopsis thaliana (Mouse-ear cress).